The chain runs to 166 residues: UPF0304 protein VC_1871 (166 aa).

Belongs to the UPF0304 family.

The sequence is that of UPF0304 protein VC_1871 from Vibrio cholerae serotype O1 (strain ATCC 39315 / El Tor Inaba N16961).